The sequence spans 575 residues: E3 ubiquitin-protein ligase IpaH1.4 (575 aa).

The segment at 1–270 is interaction with target proteins; the sequence is MIKSTNIQAI…PDYSGPQIFF (270 aa). LRR repeat units follow at residues 69–90, 91–115, 117–130, 131–150, 151–170, 171–195, 197–209, and 210–233; these read LQNQEAELNLSELDLKTLPDLP, PQITTLEIRKNLLTHLPDLPPMLKV, HAQFNQLESLPALP, ETLEELNAGDNKIKELPFLP, ENLTHLRVHNNRLHILPLLP, PELKLLVVSGNRLDSIPPFPDKLEG, ALANNFIEQLPEL, and PFSMNRAVLMNNNLTTLPESVLRL. Residues 271 to 281 form a linker region; that stretch reads SMGNSATISAP. Residues 282-575 form an E3 ubiquitin-protein ligase catalytic domain region; it reads EHSLADAVTA…LSENGSNHIA (294 aa). One can recognise an NEL domain in the interval 284–575; the sequence is SLADAVTAWF…LSENGSNHIA (292 aa). Cys-368 serves as the catalytic Glycyl thioester intermediate.

This sequence belongs to the LRR-containing bacterial E3 ligase family. In terms of assembly, interacts with human RBCK1/HOIL-1 and RNF31/HOIP components of the LUBAC complex. Ubiquitinated in the presence of host E1 ubiquitin-activating enzyme, E2 ubiquitin-conjugating enzyme and ubiquitin.

The protein localises to the secreted. It is found in the host cytoplasm. The catalysed reaction is S-ubiquitinyl-[E2 ubiquitin-conjugating enzyme]-L-cysteine + [acceptor protein]-L-lysine = [E2 ubiquitin-conjugating enzyme]-L-cysteine + N(6)-ubiquitinyl-[acceptor protein]-L-lysine.. Its pathway is protein modification; protein ubiquitination. With respect to regulation, exists in an autoinhibited state in the absence of substrate protein, probably due to interactions of the leucine-rich repeat domain with the catalytic domain. Is activated upon binding to a substrate protein. E3 ubiquitin-protein ligase effector that inhibits host cell innate immunity during bacterial infection by catalyzing 'Lys-48'-linked polyubiquitination and subsequent degradation of host RNF31/HOIP and RBCK1/HOIL-1. Host RNF31/HOIP is the catalytic component of the LUBAC complex, which conjugates linear ('Met-1'-linked) polyubiquitin chains at the surface of bacteria invading the host cytosol to form the ubiquitin coat surrounding bacteria. The bacterial ubiquitin coat acts as an 'eat-me' signal for xenophagy and promotes NF-kappa-B activation. By promoting degradation of host RNF31/HOIP, IpaH1.4 prevents formation of the bacterial ubiquitin coat and activation of host cell innate immunity. The sequence is that of E3 ubiquitin-protein ligase IpaH1.4 from Shigella flexneri.